A 209-amino-acid polypeptide reads, in one-letter code: Uracil phosphoribosyltransferase (209 aa).

5-phospho-alpha-D-ribose 1-diphosphate contacts are provided by residues Arg79, Arg104, and 131–139; that span reads DPMLATGGS. Uracil contacts are provided by residues Ile194 and 199–201; that span reads GDA. Asp200 provides a ligand contact to 5-phospho-alpha-D-ribose 1-diphosphate.

This sequence belongs to the UPRTase family. Mg(2+) serves as cofactor.

It carries out the reaction UMP + diphosphate = 5-phospho-alpha-D-ribose 1-diphosphate + uracil. It functions in the pathway pyrimidine metabolism; UMP biosynthesis via salvage pathway; UMP from uracil: step 1/1. Allosterically activated by GTP. In terms of biological role, catalyzes the conversion of uracil and 5-phospho-alpha-D-ribose 1-diphosphate (PRPP) to UMP and diphosphate. The protein is Uracil phosphoribosyltransferase of Lacticaseibacillus paracasei (strain ATCC 334 / BCRC 17002 / CCUG 31169 / CIP 107868 / KCTC 3260 / NRRL B-441) (Lactobacillus paracasei).